Reading from the N-terminus, the 163-residue chain is Probable metallophosphoesterase MG207 (163 aa).

Positions 9, 11, 34, 53, 75, 107, and 109 each coordinate Mn(2+).

Belongs to the metallophosphoesterase superfamily. YfcE family. The cofactor is Mn(2+).

This Mycoplasma genitalium (strain ATCC 33530 / DSM 19775 / NCTC 10195 / G37) (Mycoplasmoides genitalium) protein is Probable metallophosphoesterase MG207.